Reading from the N-terminus, the 276-residue chain is uncharacterized protein (276 aa).

Residues 20–137 (PVLIFIPGAN…PPINTFLPDS (118 aa)) enclose the AB hydrolase-1 domain. The interval 57–76 (GESELTEPLPDSASNPDSDY) is disordered.

Belongs to the AB hydrolase superfamily.

This is an uncharacterized protein from Staphylococcus aureus (strain N315).